We begin with the raw amino-acid sequence, 181 residues long: Neuroblastoma suppressor of tumorigenicity 1 (181 aa).

A signal peptide spans 1-16 (MMLRVLVGAVLPAMLL). 5 cysteine pairs are disulfide-bonded: Cys-35–Cys-85, Cys-49–Cys-99, Cys-59–Cys-118, Cys-63–Cys-120, and Cys-82–Cys-123. A CTCK domain is found at 35 to 124 (CEAKNITQIV…ILHCSCQACG (90 aa)). Positions 132–181 (LSVYVQGEDGPGSQPGTHPHPHPHPHPGGQTPEPEDPPGAPHTEEEGAED) are disordered.

It belongs to the DAN family. As to quaternary structure, homodimer. Most abundant in normal lung and meningioma.

It localises to the secreted. Functionally, possible candidate as a tumor suppressor gene of neuroblastoma. May play an important role in preventing cells from entering the final stage (G1/S) of the transformation process. The chain is Neuroblastoma suppressor of tumorigenicity 1 (NBL1) from Homo sapiens (Human).